The chain runs to 256 residues: MLAKRIIPCLDVTNGRVVKGVNFVELRDAGDPVEIARRYDEQGADEITFLDITATSDGRDLMLHIIEDVASQVFIPLTVGGGVRTVEDVRRLLNAGADKISVNSSAIANPQLVSDATAKYGSQCIVVAIDAKRSSAPGEAPRWEVFTHGGRKATGLDAVEWAREMAARGAGEILLTSMDRDGTKSGFDLELTRAVSDAVPVPVIASGGVGGLQDLADGITRGRADAVLAASIFHYGQHTVGEAKAFMAREGIPVRI.

Active-site residues include D11 and D130.

It belongs to the HisA/HisF family. Heterodimer of HisH and HisF.

Its subcellular location is the cytoplasm. The enzyme catalyses 5-[(5-phospho-1-deoxy-D-ribulos-1-ylimino)methylamino]-1-(5-phospho-beta-D-ribosyl)imidazole-4-carboxamide + L-glutamine = D-erythro-1-(imidazol-4-yl)glycerol 3-phosphate + 5-amino-1-(5-phospho-beta-D-ribosyl)imidazole-4-carboxamide + L-glutamate + H(+). The protein operates within amino-acid biosynthesis; L-histidine biosynthesis; L-histidine from 5-phospho-alpha-D-ribose 1-diphosphate: step 5/9. Its function is as follows. IGPS catalyzes the conversion of PRFAR and glutamine to IGP, AICAR and glutamate. The HisF subunit catalyzes the cyclization activity that produces IGP and AICAR from PRFAR using the ammonia provided by the HisH subunit. This Cupriavidus necator (strain ATCC 17699 / DSM 428 / KCTC 22496 / NCIMB 10442 / H16 / Stanier 337) (Ralstonia eutropha) protein is Imidazole glycerol phosphate synthase subunit HisF.